We begin with the raw amino-acid sequence, 330 residues long: Probable integrase/recombinase protein MJ0367 (330 aa).

The Core-binding (CB) domain occupies 22-112; the sequence is IEETDKIKEY…LLKVFYRVLR (91 aa). Residues 136–325 form the Tyr recombinase domain; sequence QHYDAVDAEM…RAESLEFIKK (190 aa). Catalysis depends on residues R177, K202, H275, R278, and H301. Y310 (O-(3'-phospho-DNA)-tyrosine intermediate) is an active-site residue.

The protein belongs to the 'phage' integrase family.

The protein is Probable integrase/recombinase protein MJ0367 of Methanocaldococcus jannaschii (strain ATCC 43067 / DSM 2661 / JAL-1 / JCM 10045 / NBRC 100440) (Methanococcus jannaschii).